The sequence spans 7839 residues: Nonribosomal peptide synthetase GRA1 (7839 aa).

Positions 1–23 (MALLNGKSTLPNGHNSSIESPNG) are enriched in polar residues. A disordered region spans residues 1-26 (MALLNGKSTLPNGHNSSIESPNGYTE). The tract at residues 264–650 (LASPNSCAVH…LGRIDDQVKI (387 aa)) is adenylation 1. The Carrier 1 domain maps to 793-866 (SAEALVLRQL…LQAEMSEKKK (74 aa)). Serine 827 bears the O-(pantetheine 4'-phosphoryl)serine mark. The segment at 916 to 1332 (DIYPASPLQE…ILSPSDVAQI (417 aa)) is condensation 1. Positions 1351 to 1742 (FFTQVKRSPD…QRKDAQLKIR (392 aa)) are adenylation 2. Residues 1880–1957 (ELETEAERTM…AMSRQATVSD (78 aa)) form the Carrier 2 domain. Serine 1918 is modified (O-(pantetheine 4'-phosphoryl)serine). The condensation 2 stretch occupies residues 1997-2413 (DLYPCTPFQE…LISPSDMETI (417 aa)). The tract at residues 2432-2828 (FDRRLSQKHS…GRRDTQLKIR (397 aa)) is adenylation 3. In terms of domain architecture, Carrier 3 spans 2963–3040 (IPTTQMEWNL…DLAQAIVLDT (78 aa)). An O-(pantetheine 4'-phosphoryl)serine modification is found at serine 3001. Positions 3084–3496 (DIYPCTPLQD…QVDLISDSDH (413 aa)) are condensation 3. The adenylation 4 stretch occupies residues 3520–3923 (RLAVSNPDAE…GRRDSQVKLR (404 aa)). Positions 4057-4134 (RPLTEREKDL…DMAAMTTSLS (78 aa)) constitute a Carrier 4 domain. The residue at position 4095 (serine 4095) is an O-(pantetheine 4'-phosphoryl)serine. The condensation 4 stretch occupies residues 4234-4569 (NLEEFVGRQS…MMNPDDAEEI (336 aa)). The interval 4591–4982 (HSKGCPDRIA…VSRKDTQVKF (392 aa)) is adenylation 5. Positions 5113–5189 (ALSSDEESQL…DMALCMTSAQ (77 aa)) constitute a Carrier 5 domain. An O-(pantetheine 4'-phosphoryl)serine modification is found at serine 5150. The segment at 5224-5653 (EDIYPCSALQ…VSPSDQAEIL (430 aa)) is condensation 5. The tract at residues 5671 to 6069 (FESRARLQPS…GRRDTQVKLR (399 aa)) is adenylation 6. Positions 6207–6282 (FPSSLAEQQM…HMAAIATTFT (76 aa)) constitute a Carrier 6 domain. Serine 6243 is modified (O-(pantetheine 4'-phosphoryl)serine). Residues 6321 to 6730 (QDIYPCSALQ…RLADMDLTGP (410 aa)) form a condensation 6 region. Positions 6756–7147 (EQRVKSQPDS…LGRKDSQIKL (392 aa)) are adenylation 7. The Carrier 7 domain occupies 7290-7366 (KAATPNEKTL…DLARVSRQSI (77 aa)). Serine 7327 is modified (O-(pantetheine 4'-phosphoryl)serine). The condensation7 stretch occupies residues 7404–7704 (HDIYPCTQVQ…LDYAKKRASS (301 aa)).

This sequence belongs to the NRP synthetase family.

It functions in the pathway mycotoxin biosynthesis. Functionally, nonribosomal peptide synthetase; part of the gene cluster that mediates the biosynthesis of gramillins A and B, bicyclic lipopeptides that induce cell death in maize leaves but not in wheat leaves. The nonribosomal peptide synthetase GRA1 incorporates respectively a glutamic adic (Glu), a leucine (Leu), a serine (Ser), a hydroxyglutamine (HOGln), a 2-amino decanoic acid, and 2 cysteins (CysB and CysA). The biosynthesis of 2-amino decanoic acid incorporated in gramillins could be initiated by a fatty acid synthase composed of the alpha and beta subunits FGSG_00036 and FGSG_11656. The cytochrome P450 monooxygenase FGSG_15680 could hydroxylate the fatty acid chain. Subsequent oxidation to the ketone by the oxidoreductase FGSG_00048 and transamination by aminotransferase FGSG_00049 could form 2-amino-decanoic acid. On the other hand, FGSG_15680 could also be responsible for the HO-modified glutamine at the gamma-position. Whether hydroxylation occurs on the fully assembled product or on the Gln residue prior to assembly into the gramillins requires further proof. The thioredoxin FGSG_00043 could also be required for the disulfide-bond formation between CysA and CysB. The specific involvement of the remaining proteins from the cluster is more difficult to discern, but could have broader regulatory (FGSG_00040 and FGSG_11657) or enzymatic functions (FGSG_00044 and FGSG_00045). The final C-domain of GRA1 does not possess the expected sequence of a termination CT domain, often implicated in macrocyclization and release of a cyclopeptidein fungal NRPs; and the thioesterase FGSG_00047 may act in concert with the terminal C-domain of GRA1 to catalyze the formation of the macrocyclic anhydride and release of the products. The polypeptide is Nonribosomal peptide synthetase GRA1 (Gibberella zeae (strain ATCC MYA-4620 / CBS 123657 / FGSC 9075 / NRRL 31084 / PH-1) (Wheat head blight fungus)).